Here is a 332-residue protein sequence, read N- to C-terminus: 30 kDa heat shock protein (332 aa).

At 1–34 (MNDTLSSFLNRNEALGLNPPHGLDMHITKRGSDW) the chain is on the extracellular side. The helical transmembrane segment at 35–55 (LWAVFAVFGFILLCYVVMFFI) threads the bilayer. At 56 to 65 (AENKGSRLTR) the chain is on the cytoplasmic side. Residues 66 to 86 (YALAPAFLITFFEFFAFFTYA) traverse the membrane as a helical segment. At 87-121 (SDLGWTGVQAEFNHVKVSKSITGEVPGIRQIFYSK) the chain is on the extracellular side. The helical transmembrane segment at 122–142 (YIAWFLSWPCLLFLIELAAST) threads the bilayer. The Cytoplasmic portion of the chain corresponds to 143–157 (TGENDDISALDMVHS). A helical membrane pass occupies residues 158–178 (LLIQIVGTLFWVVSLLVGSLI). The Extracellular portion of the chain corresponds to 179–181 (KST). Residues 182–202 (YKWGYYTIGAVAMLVTQGVIC) traverse the membrane as a helical segment. The Cytoplasmic segment spans residues 203–215 (QRQFFNLKTRGFN). Residues 216 to 236 (ALMLCTCMVIVWLYFICWGLS) form a helical membrane-spanning segment. The Extracellular segment spans residues 237 to 248 (DGGNRIQPDGEA). A helical transmembrane segment spans residues 249–269 (IFYGVLDLCVFAIYPCYLLIA). Residues 270 to 332 (VSRDGKLPRL…EAEQAVEDTA (63 aa)) are Cytoplasmic-facing. Residues 290–332 (ATDDVEDAAPETKEAVPESPRASGETAIHEPEPEAEQAVEDTA) are disordered. S308 is modified (phosphoserine). Residues 322-332 (PEAEQAVEDTA) show a composition bias toward acidic residues. T331 carries the post-translational modification Phosphothreonine.

This sequence belongs to the archaeal/bacterial/fungal opsin family.

Its subcellular location is the membrane. Probably cooperates with other heat shock proteins in the translocation of polypeptides through membranes. It may counteract the altering effect of heat shock on the plasma membrane. The chain is 30 kDa heat shock protein (HSP30) from Saccharomyces cerevisiae (strain ATCC 204508 / S288c) (Baker's yeast).